Reading from the N-terminus, the 63-residue chain is Iota-crystallin (63 aa).

It belongs to the calycin superfamily. Fatty-acid binding protein (FABP) family.

Functionally, binds vitamin A2 in the eye lens and thus functions as a UV filter. Intracellular transport of retinol. This is Iota-crystallin (CRBPI) from Gonatodes vittatus (Wiegmann's striped gecko).